Reading from the N-terminus, the 740-residue chain is METCYCIEPQWPADELLMKYQYISDFFIALAYFSIPLELIYFVKKSAVFPYRWVLVQFGAFIVLCGATHLINLWTFTMHSRTVAVVMTTAKVLTAVVSCATALMLVHIIPDLLSVKTRELFLKNKAAELDREMGLIRTQEETGRHVRMLTHEIRSTLDRHTILKTTLVELGRTLALEECALWMPTRTGLELQLSYTLHQQNPVGYTVPINLPVISQVFSSNRAVKISPNSPVASLRPRAGRYVAGEVVAVRVPLLHLSNFQINDWPELSTKRYALMVLMLPSDSARQWRVHELELVEVVADQVAVALSHAAILEESMRARDPLMEQNVALDLARREAETANHARNDFLAVMNHEMRTPMHAIIALSSLLQETELTPEQRLMVETILKSSNLLATLINDVLDLSRLEDGSLQLDIGTFNLHAVFKEVLNLIKPVTLVKKLSLTLHLGLDLPVFAVGDEKRLMQAILNVVGNAVKFSKEGSISISAIVAKAETFREIRVPDFHPVPSDSHFYLRVQVKDTGSGISPQDIPKLFTKFAQTTVGPRNSCGSGLGLAICKRFVNLMEGHIWLESEGLGKGCTATFIVKLGIAEQSNESKLPFTSKIHENSIHTSFPGLKVLVMDDNGVSRSVTKGLLVHLGCEVTTAGSIEEFLRVVSQEHKVVFMDICTPGVDGYELAIRIREKFAKCHERPFMVVLTGNSDKVTKESCLRAGMDGLILKPVSIDKMRSVLSELIERRVLFETS.

A run of 3 helical transmembrane segments spans residues 23-43, 53-73, and 92-112; these read ISDFFIALAYFSIPLELIYFV, WVLVQFGAFIVLCGATHLINL, and VLTAVVSCATALMLVHIIPDL. Positions 65 and 69 each coordinate Cu cation. The GAF domain maps to 158 to 307; the sequence is DRHTILKTTL…VVADQVAVAL (150 aa). The 239-residue stretch at 350 to 588 folds into the Histidine kinase domain; sequence VMNHEMRTPM…TFIVKLGIAE (239 aa). A Phosphohistidine; by autocatalysis modification is found at His-353. The region spanning 614 to 731 is the Response regulatory domain; it reads KVLVMDDNGV…KMRSVLSELI (118 aa). 4-aspartylphosphate is present on Asp-662.

It belongs to the ethylene receptor family. Homodimer; disulfide-linked. Cu cation is required as a cofactor. Activation probably requires a transfer of a phosphate group between a His in the transmitter domain and an Asp of the receiver domain.

It localises to the endoplasmic reticulum membrane. It catalyses the reaction ATP + protein L-histidine = ADP + protein N-phospho-L-histidine.. Its function is as follows. May act early in the ethylene signal transduction pathway, possibly as an ethylene receptor, or as a regulator of the pathway. This chain is Ethylene receptor 1 (ETR1), found in Cucumis sativus (Cucumber).